We begin with the raw amino-acid sequence, 2313 residues long: Cell surface glycoprotein 1 (2313 aa).

Residues 1–28 (MKRKNKVLSILLTLLLIISTTSVNMSFA) form the signal peptide. Cohesin domains are found at residues 34-197 (IEMV…VVEA) and 205-367 (VALE…EIVV). A compositionally biased stretch (acidic residues) spans 369–378 (GEEPGEEPTE). Residues 369-400 (GEEPGEEPTEEPVPTETSVDPTPTVTEEPVPS) form a disordered region. Low complexity predominate over residues 380–400 (PVPTETSVDPTPTVTEEPVPS). One can recognise a Cohesin 3 domain in the interval 407–569 (VIMELDKTKV…SVVQPGEIVV (163 aa)). Residues 571 to 580 (GEEPGEEPTE) show a composition bias toward acidic residues. Positions 571-602 (GEEPGEEPTEEPVPTETSVDPTPTVTEEPVPS) are disordered. Residues 582–602 (PVPTETSVDPTPTVTEEPVPS) are compositionally biased toward low complexity. Residues 609–771 (VIMELDKTKV…SVVQPGEIVA (163 aa)) enclose the Cohesin 4 domain. Residues 772–782 (EGEEPGEEPTE) show a composition bias toward acidic residues. The tract at residues 772–805 (EGEEPGEEPTEEPVPTETSADPTPTVTEEPVPSE) is disordered. Residues 784-803 (PVPTETSADPTPTVTEEPVP) are compositionally biased toward low complexity. The Cohesin 5 domain occupies 811–973 (VIMELDKTKV…SVVQPGEIVA (163 aa)). Acidic residues predominate over residues 974 to 984 (EGEEPGEEPTE). The interval 974 to 1007 (EGEEPGEEPTEEPVPTETPVDPTPTVTEEPVPSE) is disordered. The segment covering 986–1007 (PVPTETPVDPTPTVTEEPVPSE) has biased composition (low complexity). The Cohesin 6 domain maps to 1013 to 1175 (VIMELDKTKV…SVVQPGEIVA (163 aa)). Disordered regions lie at residues 1177 to 1203 (GEEP…EPVP) and 1374 to 2111 (ASDE…PDGS). Residues 1184–1203 (PVPTETPVDPTPTVTEEPVP) show a composition bias toward low complexity. Residues 1211 to 1375 (VIMELDKTKV…IQPAPIKAAS (165 aa)) form the Cohesin 7 domain. The segment covering 1376–1390 (DEPIPTDTPSDEPTP) has biased composition (low complexity). Residues 1383–2025 (TPSDEPTPSD…SDEPTPSETP (643 aa)) are approximate tandem repeats of T-P-S-D-E-P. Residues 1391 to 1411 (SDEPTPSDEPTPSDEPTPSDE) are compositionally biased toward pro residues. The segment covering 1423–1433 (PTDTPSDEPTP) has biased composition (low complexity). Positions 1434–1454 (SDEPTPSDEPTPSDEPTPSDE) are enriched in pro residues. Residues 1466 to 1476 (PTDTPSDEPTP) show a composition bias toward low complexity. Over residues 1477–1497 (SDEPTPSDEPTPSDEPTPSDE) the composition is skewed to pro residues. Residues 1509-1519 (PTDTPSDEPTP) show a composition bias toward low complexity. Residues 1520–1540 (SDEPTPSDEPTPSDEPTPSDE) show a composition bias toward pro residues. Residues 1552–1562 (PTDTPSDEPTP) show a composition bias toward low complexity. Over residues 1563–1595 (SDEPTPSDEPTPSDEPTPSDEPTPSDEPTPSDE) the composition is skewed to pro residues. Over residues 1607–1617 (PTDTPSDEPTP) the composition is skewed to low complexity. The segment covering 1618 to 1650 (SDEPTPSDEPTPSDEPTPSDEPTPSDEPTPSDE) has biased composition (pro residues). A compositionally biased stretch (low complexity) spans 1662 to 1672 (PTDTPSDEPTP). A compositionally biased stretch (pro residues) spans 1673-1693 (SDEPTPSDEPTPSDEPTPSDE). The segment covering 1705-1715 (PTDTPSDEPTP) has biased composition (low complexity). A compositionally biased stretch (pro residues) spans 1716 to 1736 (SDEPTPSDEPTPSDEPTPSDE). The span at 1748–1758 (PTDTPSDEPTP) shows a compositional bias: low complexity. Residues 1759–1779 (SDEPTPSDEPTPSDEPTPSDE) are compositionally biased toward pro residues. Residues 1791 to 1801 (PTDTPSDEPTP) are compositionally biased toward low complexity. Pro residues predominate over residues 1802–1822 (SDEPTPSDEPTPSDEPTPSDE). The segment covering 1834 to 1844 (PTDTPSDEPTP) has biased composition (low complexity). Pro residues predominate over residues 1845–1865 (SDEPTPSDEPTPSDEPTPSDE). A compositionally biased stretch (low complexity) spans 1877–1887 (PTDTPSDEPTP). A compositionally biased stretch (pro residues) spans 1888–1908 (SDEPTPSDEPTPSDEPTPSDE). The span at 1920 to 1930 (PTDTPSDEPTP) shows a compositional bias: low complexity. Positions 1931–1963 (SDEPTPSDEPTPSDEPTPSDEPTPSDEPTPSDE) are enriched in pro residues. Residues 1975–1985 (PTDTPSDEPTP) are compositionally biased toward low complexity. Pro residues-rich tracts occupy residues 1986-2018 (SDEP…PSDE) and 2027-2039 (EPTP…PTPS). The segment covering 2045–2062 (GSGGSGGSGGGGGGGGGT) has biased composition (gly residues). 3 SLH domains span residues 2067-2140 (PTPT…YGAQ), 2141-2204 (SASP…EIMS), and 2211-2274 (ISNP…GAPK). Over residues 2073-2082 (SKPTSTPAPT) the composition is skewed to low complexity.

As to quaternary structure, assembled into mono-layered crystalline arrays.

It is found in the secreted. The protein resides in the cell wall. The protein localises to the S-layer. The protein is Cell surface glycoprotein 1 (olpB) of Acetivibrio thermocellus (strain ATCC 27405 / DSM 1237 / JCM 9322 / NBRC 103400 / NCIMB 10682 / NRRL B-4536 / VPI 7372) (Clostridium thermocellum).